A 435-amino-acid chain; its full sequence is Methylenetetrahydrofolate--tRNA-(uracil-5-)-methyltransferase TrmFO (435 aa).

Residue 9 to 14 coordinates FAD; it reads GAGLAG.

Belongs to the MnmG family. TrmFO subfamily. The cofactor is FAD.

The protein resides in the cytoplasm. The catalysed reaction is uridine(54) in tRNA + (6R)-5,10-methylene-5,6,7,8-tetrahydrofolate + NADH + H(+) = 5-methyluridine(54) in tRNA + (6S)-5,6,7,8-tetrahydrofolate + NAD(+). The enzyme catalyses uridine(54) in tRNA + (6R)-5,10-methylene-5,6,7,8-tetrahydrofolate + NADPH + H(+) = 5-methyluridine(54) in tRNA + (6S)-5,6,7,8-tetrahydrofolate + NADP(+). Its function is as follows. Catalyzes the folate-dependent formation of 5-methyl-uridine at position 54 (M-5-U54) in all tRNAs. This chain is Methylenetetrahydrofolate--tRNA-(uracil-5-)-methyltransferase TrmFO, found in Staphylococcus saprophyticus subsp. saprophyticus (strain ATCC 15305 / DSM 20229 / NCIMB 8711 / NCTC 7292 / S-41).